Here is a 383-residue protein sequence, read N- to C-terminus: Non-structural maintenance of chromosomes element 4 homolog B (383 aa).

Residues 1-22 (MRNSVKWETELTGDRSRRREAD) are compositionally biased toward basic and acidic residues. Disordered stretches follow at residues 1–59 (MRNS…EQGI), 198–231 (MKQR…EKKS), and 355–383 (QGSV…NGGL). Basic residues predominate over residues 201–212 (RKSRVGNRKRTK). Residues 355–372 (QGSVIQEETVVEDSSNME) are compositionally biased toward polar residues.

It belongs to the NSE4 family. As to quaternary structure, interacts with SMC5, SMC6A or SMC6B. The SMC5-SMC6 complex is composed of the SMC5 and SMC6 heterodimer attached via their hinge domain and from the non-SMC subunit NSE4A or NSE4B. In terms of tissue distribution, not expressed in seedlings, rosette leaves and floral buds.

It is found in the nucleus. Its function is as follows. Component of the SMC5-SMC6 complex, that promotes sister chromatid alignment after DNA damage and facilitates double-stranded DNA breaks (DSBs) repair via homologous recombination between sister chromatids. This is Non-structural maintenance of chromosomes element 4 homolog B (NSE4B) from Arabidopsis thaliana (Mouse-ear cress).